Here is a 746-residue protein sequence, read N- to C-terminus: Ferrienterobactin receptor (746 aa).

An N-terminal signal peptide occupies residues 1–22 (MNKKIHSLALLVNLGIYGVAQA). The TonB box signature appears at 34 to 41 (DTIVVTAA). The TBDR plug domain occupies 42-169 (EQNLQAPGVS…AGGVVNIITK (128 aa)). The interval 76-96 (GVNLTGNSTSGQRGNNRQIDI) is disordered. A compositionally biased stretch (polar residues) spans 79–93 (LTGNSTSGQRGNNRQ). The TBDR beta-barrel domain maps to 174–746 (EWHGSWDAYF…TWYMSVNTHF (573 aa)). Residues 729–746 (YTYNEPGRTWYMSVNTHF) carry the TonB C-terminal box motif.

The protein belongs to the TonB-dependent receptor family.

It is found in the cell outer membrane. This protein is involved in the initial step of iron uptake by binding ferrienterobactin (Fe-ENT), an iron chelatin siderophore that allows E.coli to extract iron from the environment. FepA also acts as a receptor for colicins B and D. This chain is Ferrienterobactin receptor (fepA), found in Escherichia coli (strain K12).